A 255-amino-acid polypeptide reads, in one-letter code: 28.1 kDa virulence protein (255 aa).

The protein belongs to the SpvA family.

Its function is as follows. Not known. This protein is involved in the virulence of salmonellas. This chain is 28.1 kDa virulence protein (mkaB), found in Salmonella typhimurium.